The following is a 545-amino-acid chain: Metal transporter NRAT1 (545 aa).

The next 12 membrane-spanning stretches (helical) occupy residues 51-71 (FLAH…PSNL), 84-104 (ELLW…TLAA), 128-148 (IFLW…EVLG), 155-175 (ILLK…TLLL), 188-208 (FIIA…LSYL), 234-254 (IALF…ALVL), 278-298 (LAFI…GSIC), 333-353 (VVYA…CTFA), 373-395 (LITR…PSGA), 398-418 (LIIL…IPLL), 437-457 (VVIA…FLVW), and 474-494 (GLIS…VVYL). The interval 516 to 545 (EAGGTPVVDASAADEDQPAPYRKDLADASM) is disordered. The span at 536-545 (YRKDLADASM) shows a compositional bias: basic and acidic residues.

The protein belongs to the NRAMP (TC 2.A.55) family. As to expression, expressed at low levels in roots.

The protein localises to the cell membrane. Functionally, metal transporter that transports the trivalent cation aluminum (Al(3+)), but does not seem to transport divalent cations such as iron (Fe(2+)), manganese (Mg(2+)) or Cadmium (Cd(2+)). Involved in Al tolerance by taking up Al in root cells, where it is detoxified by chelation with organic acid anions and sequestration into the vacuoles. This chain is Metal transporter NRAT1 (NRAT1), found in Oryza sativa subsp. japonica (Rice).